Consider the following 160-residue polypeptide: Transcriptional repressor NrdR (160 aa).

Residues 3–34 (CPSCQNTDSRVLESRAADGGRSVRRRRECLNC) fold into a zinc finger. Residues 49–139 (ITVIKRNGNR…VYRQFRGIDD (91 aa)) enclose the ATP-cone domain.

It belongs to the NrdR family. Requires Zn(2+) as cofactor.

Negatively regulates transcription of bacterial ribonucleotide reductase nrd genes and operons by binding to NrdR-boxes. In Synechococcus sp. (strain CC9605), this protein is Transcriptional repressor NrdR.